A 290-amino-acid polypeptide reads, in one-letter code: 4-hydroxy-3-methylbut-2-enyl diphosphate reductase (290 aa).

Cys-13 is a [4Fe-4S] cluster binding site. Positions 41 and 75 each coordinate (2E)-4-hydroxy-3-methylbut-2-enyl diphosphate. Positions 41 and 75 each coordinate dimethylallyl diphosphate. Residues His-41 and His-75 each contribute to the isopentenyl diphosphate site. Cys-97 contributes to the [4Fe-4S] cluster binding site. His-129 contributes to the (2E)-4-hydroxy-3-methylbut-2-enyl diphosphate binding site. Position 129 (His-129) interacts with dimethylallyl diphosphate. His-129 contacts isopentenyl diphosphate. The active-site Proton donor is the Glu-131. Thr-167 is a binding site for (2E)-4-hydroxy-3-methylbut-2-enyl diphosphate. Cys-198 lines the [4Fe-4S] cluster pocket. Residues Ser-226, Ser-227, Asn-228, and Ser-270 each coordinate (2E)-4-hydroxy-3-methylbut-2-enyl diphosphate. Dimethylallyl diphosphate is bound by residues Ser-226, Ser-227, Asn-228, and Ser-270. Isopentenyl diphosphate contacts are provided by Ser-226, Ser-227, Asn-228, and Ser-270.

The protein belongs to the IspH family. [4Fe-4S] cluster is required as a cofactor.

The catalysed reaction is isopentenyl diphosphate + 2 oxidized [2Fe-2S]-[ferredoxin] + H2O = (2E)-4-hydroxy-3-methylbut-2-enyl diphosphate + 2 reduced [2Fe-2S]-[ferredoxin] + 2 H(+). It catalyses the reaction dimethylallyl diphosphate + 2 oxidized [2Fe-2S]-[ferredoxin] + H2O = (2E)-4-hydroxy-3-methylbut-2-enyl diphosphate + 2 reduced [2Fe-2S]-[ferredoxin] + 2 H(+). The protein operates within isoprenoid biosynthesis; dimethylallyl diphosphate biosynthesis; dimethylallyl diphosphate from (2E)-4-hydroxy-3-methylbutenyl diphosphate: step 1/1. It functions in the pathway isoprenoid biosynthesis; isopentenyl diphosphate biosynthesis via DXP pathway; isopentenyl diphosphate from 1-deoxy-D-xylulose 5-phosphate: step 6/6. Functionally, catalyzes the conversion of 1-hydroxy-2-methyl-2-(E)-butenyl 4-diphosphate (HMBPP) into a mixture of isopentenyl diphosphate (IPP) and dimethylallyl diphosphate (DMAPP). Acts in the terminal step of the DOXP/MEP pathway for isoprenoid precursor biosynthesis. The protein is 4-hydroxy-3-methylbut-2-enyl diphosphate reductase of Bacteroides fragilis (strain ATCC 25285 / DSM 2151 / CCUG 4856 / JCM 11019 / LMG 10263 / NCTC 9343 / Onslow / VPI 2553 / EN-2).